The sequence spans 368 residues: tRNA-specific 2-thiouridylase MnmA (368 aa).

ATP-binding positions include 11-18 and Met37; that span reads GMSGGVDS. Residues 97–99 form an interaction with target base in tRNA region; that stretch reads NPD. The Nucleophile role is filled by Cys102. A disulfide bridge links Cys102 with Cys199. Gly127 contributes to the ATP binding site. The tract at residues 149-151 is interaction with tRNA; it reads KDQ. The Cysteine persulfide intermediate role is filled by Cys199. Residues 311–312 are interaction with tRNA; the sequence is RY.

It belongs to the MnmA/TRMU family. Interacts with TusE.

The protein localises to the cytoplasm. The catalysed reaction is S-sulfanyl-L-cysteinyl-[protein] + uridine(34) in tRNA + AH2 + ATP = 2-thiouridine(34) in tRNA + L-cysteinyl-[protein] + A + AMP + diphosphate + H(+). Functionally, catalyzes the 2-thiolation of uridine at the wobble position (U34) of tRNA(Lys), tRNA(Glu) and tRNA(Gln), leading to the formation of s(2)U34, the first step of tRNA-mnm(5)s(2)U34 synthesis. Sulfur is provided by IscS, via a sulfur-relay system. Binds ATP and its substrate tRNAs. The chain is tRNA-specific 2-thiouridylase MnmA from Escherichia coli (strain SMS-3-5 / SECEC).